A 160-amino-acid chain; its full sequence is SsrA-binding protein (160 aa).

Belongs to the SmpB family.

The protein resides in the cytoplasm. In terms of biological role, required for rescue of stalled ribosomes mediated by trans-translation. Binds to transfer-messenger RNA (tmRNA), required for stable association of tmRNA with ribosomes. tmRNA and SmpB together mimic tRNA shape, replacing the anticodon stem-loop with SmpB. tmRNA is encoded by the ssrA gene; the 2 termini fold to resemble tRNA(Ala) and it encodes a 'tag peptide', a short internal open reading frame. During trans-translation Ala-aminoacylated tmRNA acts like a tRNA, entering the A-site of stalled ribosomes, displacing the stalled mRNA. The ribosome then switches to translate the ORF on the tmRNA; the nascent peptide is terminated with the 'tag peptide' encoded by the tmRNA and targeted for degradation. The ribosome is freed to recommence translation, which seems to be the essential function of trans-translation. The chain is SsrA-binding protein from Pectobacterium carotovorum subsp. carotovorum (strain PC1).